Consider the following 340-residue polypeptide: Nuclear transcription factor Y subunit A-3 (340 aa).

The tract at residues S43–G116 is disordered. The span at Q60–S77 shows a compositional bias: low complexity. Positions Y78–I103 are enriched in polar residues. The Subunit association domain (SAD) motif lies at F182–N205. Positions K212 to T237 form a DNA-binding region, NFYA/HAP2-type.

It belongs to the NFYA/HAP2 subunit family. As to quaternary structure, heterotrimeric transcription factor composed of three components, NF-YA, NF-YB and NF-YC. NF-YB and NF-YC must interact and dimerize for NF-YA association and DNA binding. Ubiquitous.

The protein resides in the nucleus. Its function is as follows. Stimulates the transcription of various genes by recognizing and binding to a CCAAT motif in promoters. The chain is Nuclear transcription factor Y subunit A-3 (NFYA3) from Arabidopsis thaliana (Mouse-ear cress).